We begin with the raw amino-acid sequence, 161 residues long: Large ribosomal subunit protein uL10 (161 aa).

It belongs to the universal ribosomal protein uL10 family. Part of the ribosomal stalk of the 50S ribosomal subunit. The N-terminus interacts with L11 and the large rRNA to form the base of the stalk. The C-terminus forms an elongated spine to which L12 dimers bind in a sequential fashion forming a multimeric L10(L12)X complex.

Its function is as follows. Forms part of the ribosomal stalk, playing a central role in the interaction of the ribosome with GTP-bound translation factors. The protein is Large ribosomal subunit protein uL10 of Buchnera aphidicola subsp. Cinara cedri (strain Cc).